An 876-amino-acid chain; its full sequence is Alanine--tRNA ligase (876 aa).

The Zn(2+) site is built by His565, His569, Cys667, and His671.

This sequence belongs to the class-II aminoacyl-tRNA synthetase family. Requires Zn(2+) as cofactor.

The protein resides in the cytoplasm. The enzyme catalyses tRNA(Ala) + L-alanine + ATP = L-alanyl-tRNA(Ala) + AMP + diphosphate. In terms of biological role, catalyzes the attachment of alanine to tRNA(Ala) in a two-step reaction: alanine is first activated by ATP to form Ala-AMP and then transferred to the acceptor end of tRNA(Ala). Also edits incorrectly charged Ser-tRNA(Ala) and Gly-tRNA(Ala) via its editing domain. This Staphylococcus epidermidis (strain ATCC 35984 / DSM 28319 / BCRC 17069 / CCUG 31568 / BM 3577 / RP62A) protein is Alanine--tRNA ligase.